The primary structure comprises 122 residues: N(2)-fixation sustaining protein CowN (122 aa).

The protein belongs to the CowN family.

In terms of biological role, is required to sustain N(2)-dependent growth in the presence of low levels of carbon monoxide (CO). Probably acts by protecting the N(2) fixation ability of the nitrogenase complex, which is inactivated in the presence of CO. In Azorhizobium caulinodans (strain ATCC 43989 / DSM 5975 / JCM 20966 / LMG 6465 / NBRC 14845 / NCIMB 13405 / ORS 571), this protein is N(2)-fixation sustaining protein CowN.